Consider the following 285-residue polypeptide: Phosphatase YwpJ (285 aa).

Asp-7 serves as the catalytic Nucleophile. Asp-7 provides a ligand contact to Mg(2+). Leu-8 lines the phosphate pocket. Mg(2+) is bound at residue Asp-9. Phosphate is bound by residues 41-42 (TG) and Lys-214. Mg(2+) contacts are provided by Asp-237 and Ser-238. Residues Asn-240 and 282–283 (KH) contribute to the phosphate site.

The protein belongs to the HAD-like hydrolase superfamily. Cof family. Requires Mg(2+) as cofactor.

Catalyzes the dephosphorylation of phosphorylated 5-6 carbon sugars and monophosphate nucleotides (NMP) in vitro. To a lesser extent, dephosphorylates flavin mononucleotide (FMN) in vitro. In Bacillus subtilis (strain 168), this protein is Phosphatase YwpJ (ywpJ).